The sequence spans 238 residues: Proteasome subunit beta type-6 (238 aa).

At Ala-2 the chain carries N-acetylalanine. Residues 2-33 (AAALAVRRAGSAPAFGPEALTPDWENREVSTG) constitute a propeptide, removed in mature form. Thr-34 (nucleophile) is an active-site residue. Residue Thr-68 is modified to Phosphothreonine.

It belongs to the peptidase T1B family. The 26S proteasome consists of a 20S proteasome core and two 19S regulatory subunits. The 20S proteasome core is a barrel-shaped complex made of 28 subunits that are arranged in four stacked rings. The two outer rings are each formed by seven alpha subunits, and the two inner rings are formed by seven beta subunits. The proteolytic activity is exerted by three beta-subunits PSMB5, PSMB6 and PSMB7.

Its subcellular location is the cytoplasm. It is found in the nucleus. It carries out the reaction Cleavage of peptide bonds with very broad specificity.. In terms of biological role, component of the 20S core proteasome complex involved in the proteolytic degradation of most intracellular proteins. This complex plays numerous essential roles within the cell by associating with different regulatory particles. Associated with two 19S regulatory particles, forms the 26S proteasome and thus participates in the ATP-dependent degradation of ubiquitinated proteins. The 26S proteasome plays a key role in the maintenance of protein homeostasis by removing misfolded or damaged proteins that could impair cellular functions, and by removing proteins whose functions are no longer required. Associated with the PA200 or PA28, the 20S proteasome mediates ubiquitin-independent protein degradation. This type of proteolysis is required in several pathways including spermatogenesis (20S-PA200 complex) or generation of a subset of MHC class I-presented antigenic peptides (20S-PA28 complex). Within the 20S core complex, PSMB6 displays a peptidylglutamyl-hydrolyzing activity also termed postacidic or caspase-like activity, meaning that the peptides bond hydrolysis occurs directly after acidic residues. The chain is Proteasome subunit beta type-6 (Psmb6) from Mus musculus (Mouse).